We begin with the raw amino-acid sequence, 268 residues long: uncharacterized protein (268 aa).

The segment at 21–61 (CVICLQKDGLRAQLSPCGHDQFDYSCICRWMDQSLTCPICK) adopts an RING-type; degenerate zinc-finger fold.

The protein localises to the mitochondrion. It is found in the nucleus. This is an uncharacterized protein from Schizosaccharomyces pombe (strain 972 / ATCC 24843) (Fission yeast).